The chain runs to 632 residues: Phosphomethylpyrimidine synthase (632 aa).

Substrate contacts are provided by residues Asn237, Met266, Tyr295, His331, 351-353, 392-395, and Glu431; these read SRG and DGLR. Residue His435 participates in Zn(2+) binding. Tyr458 lines the substrate pocket. His499 contributes to the Zn(2+) binding site. [4Fe-4S] cluster contacts are provided by Cys579, Cys582, and Cys587.

This sequence belongs to the ThiC family. In terms of assembly, homodimer. [4Fe-4S] cluster is required as a cofactor.

The enzyme catalyses 5-amino-1-(5-phospho-beta-D-ribosyl)imidazole + S-adenosyl-L-methionine = 4-amino-2-methyl-5-(phosphooxymethyl)pyrimidine + CO + 5'-deoxyadenosine + formate + L-methionine + 3 H(+). It participates in cofactor biosynthesis; thiamine diphosphate biosynthesis. In terms of biological role, catalyzes the synthesis of the hydroxymethylpyrimidine phosphate (HMP-P) moiety of thiamine from aminoimidazole ribotide (AIR) in a radical S-adenosyl-L-methionine (SAM)-dependent reaction. In Nitrosomonas eutropha (strain DSM 101675 / C91 / Nm57), this protein is Phosphomethylpyrimidine synthase.